We begin with the raw amino-acid sequence, 931 residues long: Glycine dehydrogenase (decarboxylating) (931 aa).

At lysine 684 the chain carries N6-(pyridoxal phosphate)lysine.

The protein belongs to the GcvP family. The glycine cleavage system is composed of four proteins: P, T, L and H. It depends on pyridoxal 5'-phosphate as a cofactor.

The enzyme catalyses N(6)-[(R)-lipoyl]-L-lysyl-[glycine-cleavage complex H protein] + glycine + H(+) = N(6)-[(R)-S(8)-aminomethyldihydrolipoyl]-L-lysyl-[glycine-cleavage complex H protein] + CO2. Its function is as follows. The glycine cleavage system catalyzes the degradation of glycine. The P protein binds the alpha-amino group of glycine through its pyridoxal phosphate cofactor; CO(2) is released and the remaining methylamine moiety is then transferred to the lipoamide cofactor of the H protein. The protein is Glycine dehydrogenase (decarboxylating) of Bartonella henselae (strain ATCC 49882 / DSM 28221 / CCUG 30454 / Houston 1) (Rochalimaea henselae).